Consider the following 164-residue polypeptide: Peptidyl-prolyl cis-trans isomerase A-like 4A (164 aa).

Positions 7 to 163 (FFDITVDGKP…KKITIADCGQ (157 aa)) constitute a PPIase cyclophilin-type domain.

Belongs to the cyclophilin-type PPIase family. PPIase A subfamily. In terms of tissue distribution, highly expressed in brain, ovary and mammary gland. Moderately expressed in lung, salivary gland, kidney, skin, adipose tissue, intestine and spleen. Weakly expressed in skeletal muscle, liver and stomach. Expressed in pleiomorphic and undifferentiated liposarcomas, osteosarcomas and breast carcinomas.

It localises to the cytoplasm. It carries out the reaction [protein]-peptidylproline (omega=180) = [protein]-peptidylproline (omega=0). In terms of biological role, PPIases accelerate the folding of proteins. It catalyzes the cis-trans isomerization of proline imidic peptide bonds in oligopeptides. The protein is Peptidyl-prolyl cis-trans isomerase A-like 4A of Homo sapiens (Human).